Consider the following 1080-residue polypeptide: DNA-directed RNA polymerase subunit beta (1080 aa).

It belongs to the RNA polymerase beta chain family. In terms of assembly, in plastids the minimal PEP RNA polymerase catalytic core is composed of four subunits: alpha, beta, beta', and beta''. When a (nuclear-encoded) sigma factor is associated with the core the holoenzyme is formed, which can initiate transcription.

Its subcellular location is the plastid. It localises to the chloroplast. It catalyses the reaction RNA(n) + a ribonucleoside 5'-triphosphate = RNA(n+1) + diphosphate. Functionally, DNA-dependent RNA polymerase catalyzes the transcription of DNA into RNA using the four ribonucleoside triphosphates as substrates. This is DNA-directed RNA polymerase subunit beta from Mesostigma viride (Green alga).